The following is a 327-amino-acid chain: Elongation factor P--(R)-beta-lysine ligase (327 aa).

78-80 is a substrate binding site; it reads SPE. ATP contacts are provided by residues 102-104 and Asn-111; that span reads RNQ. Residue Tyr-120 coordinates substrate. Position 246 to 247 (246 to 247) interacts with ATP; sequence EL. Substrate is bound at residue Glu-253. Gly-302 is a binding site for ATP.

This sequence belongs to the class-II aminoacyl-tRNA synthetase family. EpmA subfamily. In terms of assembly, homodimer.

It carries out the reaction D-beta-lysine + L-lysyl-[protein] + ATP = N(6)-((3R)-3,6-diaminohexanoyl)-L-lysyl-[protein] + AMP + diphosphate + H(+). In terms of biological role, with EpmB is involved in the beta-lysylation step of the post-translational modification of translation elongation factor P (EF-P). Catalyzes the ATP-dependent activation of (R)-beta-lysine produced by EpmB, forming a lysyl-adenylate, from which the beta-lysyl moiety is then transferred to the epsilon-amino group of a conserved specific lysine residue in EF-P. The chain is Elongation factor P--(R)-beta-lysine ligase from Baumannia cicadellinicola subsp. Homalodisca coagulata.